We begin with the raw amino-acid sequence, 152 residues long: Synaptobrevin (152 aa).

Over residues methionine 1 to aspartate 16 the composition is skewed to polar residues. A disordered region spans residues methionine 1–tyrosine 30. Residues methionine 1–lysine 110 lie on the Cytoplasmic side of the membrane. The v-SNARE coiled-coil homology domain occupies lysine 47–alanine 107. A helical; Anchor for type IV membrane protein membrane pass occupies residues methionine 111–valine 130. Residues tryptophan 131 to histidine 152 are Vesicular-facing. Residues serine 133 to histidine 152 are disordered.

The protein belongs to the synaptobrevin family. As to quaternary structure, part of the SNARE core complex containing Snap25 and syntaxin. Post-translationally, ubiquitinated by gzl, regulating endocytic trafficking. In wing imaginal disks, ubiquitination by gzl promotes transcytosis of wingless (wg) to the basolateral surface. Not nervous system-specific; abundant in cells of the gut and Malpighian tubules.

Its subcellular location is the cytoplasmic vesicle. The protein localises to the secretory vesicle. It is found in the synaptic vesicle membrane. The protein resides in the cell membrane. Involved in the targeting and/or fusion of transport vesicles to their target membrane. In Drosophila melanogaster (Fruit fly), this protein is Synaptobrevin.